A 1499-amino-acid chain; its full sequence is Rho GTPase-activating protein 35 (1499 aa).

The segment at 1 to 266 (MMMARKQDVR…IPYFEALKQQ (266 aa)) is has GTPase activity, required for proper localization. GTP-binding positions include Lys-28, 33 to 37 (IGKSC), Leu-52, Ser-56, 95 to 97 (EQT), 201 to 203 (KCD), and 229 to 231 (SAR). 4 FF domains span residues 270-327 (IATA…HIHR), 368-422 (KLLE…HLEK), 429-483 (RAEM…HQKQ), and 485-550 (IDRA…HIHF). Tyr-308 carries the post-translational modification Phosphotyrosine. Ser-589 carries the phosphoserine modification. Residues 592–767 (DPNIDRINLV…LLDSKRNLNL (176 aa)) form the pG1 pseudoGTPase domain. Phosphoserine occurs at positions 770 and 773. Positions 783–947 (RIVMCLMCGD…FKDVVEKKNI (165 aa)) constitute a pG2 pseudoGTPase domain. Phosphoserine occurs at positions 970, 975, 985, and 1072. Tyr-1087 carries the post-translational modification Phosphotyrosine. Position 1105 is a phosphotyrosine; by ABL2 and PTK6 (Tyr-1105). Positions 1124–1141 (KAQSNGSGNGSDSEMDTS) are enriched in polar residues. Residues 1124 to 1148 (KAQSNGSGNGSDSEMDTSSLERGRK) form a disordered region. Phosphoserine is present on residues Ser-1134, Ser-1142, Ser-1150, Ser-1176, Ser-1179, and Ser-1221. Positions 1177 to 1207 (VGSDDELGPIRKKEEDQASQGYKGDNAVIPY) are disordered. The segment at 1213 to 1236 (PRRRNILRSLRRNTKKPKPKPRPS) is required for phospholipid binding and regulation of the substrate preference. Thr-1226 bears the Phosphothreonine mark. The residue at position 1236 (Ser-1236) is a Phosphoserine. Residues 1249-1436 (VPLTTVVTPE…LFIQQCPFFF (188 aa)) form the Rho-GAP domain. Residues 1446–1499 (GAAPGSPSAMAPTVPFLTSTPATSQPSPPQSPPPTPQSPMQPLLSSQLQAEHTL) form a disordered region. Over residues 1448 to 1470 (APGSPSAMAPTVPFLTSTPATSQ) the composition is skewed to low complexity. The span at 1471–1484 (PSPPQSPPPTPQSP) shows a compositional bias: pro residues. Phosphoserine occurs at positions 1472 and 1476. Phosphothreonine is present on Thr-1480. Ser-1483 is modified (phosphoserine). Residues 1485-1499 (MQPLLSSQLQAEHTL) show a composition bias toward low complexity.

In terms of assembly, interacts with RASA1. Interacts with the general transcription factor GTF2I, the interaction sequesters GTF2I in the cytoplasm. Phosphorylation of Tyr-1105 by PTK6 promotes the association with RASA1, inactivating RHOA while activating RAS. Phosphorylation at Tyr-308 by PDGFRA inhibits binding to GTF2I. Phosphorylated by PRKCA at Ser-1221 and Thr-1226, induces relocalization from the cytoplasm to regions of plasma membrane ruffling and prevents the binding and substrate specificity regulation by phospholipids. In brain, phosphorylated by FYN and SRC. During focal adhesion formation, phosphorylated by MAPK1 and MAPK3 at the C-terminal region, probably at Ser-1451, Ser-1476, Thr-1480 and Ser-1483. Phosphorylation by MAPK1 and MAPK3 inhibits GAP function and localizes ARGHAP35 away from newly forming focal adhesions and stress fibers in cells spreading on fibronectin. Phosphorylation at Ser-1476 and Thr-1480 by GSK3B requires priming by MAPK and inhibits RhoGAP activity and modulates polarized cell migration. As to expression, ubiquitously expressed.

Its subcellular location is the cytoplasm. The protein localises to the cytoskeleton. It localises to the cilium basal body. It is found in the nucleus. The protein resides in the cell membrane. Functionally, rho GTPase-activating protein (GAP). Binds several acidic phospholipids which inhibits the Rho GAP activity to promote the Rac GAP activity. This binding is inhibited by phosphorylation by PRKCA. Involved in cell differentiation as well as cell adhesion and migration, plays an important role in retinal tissue morphogenesis, neural tube fusion, midline fusion of the cerebral hemispheres and mammary gland branching morphogenesis. Transduces signals from p21-ras to the nucleus, acting via the ras GTPase-activating protein (GAP). Transduces SRC-dependent signals from cell-surface adhesion molecules, such as laminin, to promote neurite outgrowth. Regulates axon outgrowth, guidance and fasciculation. Modulates Rho GTPase-dependent F-actin polymerization, organization and assembly, is involved in polarized cell migration and in the positive regulation of ciliogenesis and cilia elongation. During mammary gland development, is required in both the epithelial and stromal compartments for ductal outgrowth. Represses transcription of the glucocorticoid receptor by binding to the cis-acting regulatory sequence 5'-GAGAAAAGAAACTGGAGAAACTC-3'; this function is however unclear and would need additional experimental evidences. In Rattus norvegicus (Rat), this protein is Rho GTPase-activating protein 35.